We begin with the raw amino-acid sequence, 1088 residues long: Ran-binding protein 17 (1088 aa).

Residue alanine 2 is modified to N-acetylalanine. Serine 569 bears the Phosphoserine mark.

Belongs to the exportin family. As to quaternary structure, binds to nucleoporins and the GTP-bound form of Ran. As to expression, highly expressed in testis, moderately in pancreas and weakly in other tissues studied.

The protein localises to the cytoplasm. It localises to the nucleus. It is found in the nuclear pore complex. Functionally, may function as a nuclear transport receptor. The polypeptide is Ran-binding protein 17 (RANBP17) (Homo sapiens (Human)).